A 132-amino-acid chain; its full sequence is Agouti-signaling protein (132 aa).

The signal sequence occupies residues 1–22; it reads MDVTRLLLATLLVFLCFFTAYS. N-linked (GlcNAc...) asparagine glycosylation is present at N39. The segment at 58 to 88 is disordered; the sequence is KSKQMSRKEAEKKRSSKKEASMKKVARPRTP. Residues 63 to 79 are compositionally biased toward basic and acidic residues; that stretch reads SRKEAEKKRSSKKEASM. Disulfide bonds link C93/C108, C100/C114, C107/C125, C111/C132, and C116/C123. One can recognise an Agouti domain in the interval 93-132; sequence CVATRDSCKPPAPACCDPCASCQCRFFRSACSCRVLSLNC.

It localises to the secreted. Functionally, involved in the regulation of melanogenesis. The binding of ASP to MC1R precludes alpha-MSH initiated signaling and thus blocks production of cAMP, leading to a down-regulation of eumelanogenesis (brown/black pigment) and thus increasing synthesis of pheomelanin (yellow/red pigment). In Cercopithecus mitis (Blue monkey), this protein is Agouti-signaling protein (ASIP).